The sequence spans 38 residues: Cytochrome b6-f complex subunit 5 (38 aa).

The helical transmembrane segment at 5 to 25 (LLLGIVLGLIPITLAGLFVAA) threads the bilayer.

It belongs to the PetG family. The 4 large subunits of the cytochrome b6-f complex are cytochrome b6, subunit IV (17 kDa polypeptide, PetD), cytochrome f and the Rieske protein, while the 4 small subunits are PetG, PetL, PetM and PetN. The complex functions as a dimer.

Its subcellular location is the cellular thylakoid membrane. Component of the cytochrome b6-f complex, which mediates electron transfer between photosystem II (PSII) and photosystem I (PSI), cyclic electron flow around PSI, and state transitions. PetG is required for either the stability or assembly of the cytochrome b6-f complex. The protein is Cytochrome b6-f complex subunit 5 of Crocosphaera subtropica (strain ATCC 51142 / BH68) (Cyanothece sp. (strain ATCC 51142)).